A 205-amino-acid polypeptide reads, in one-letter code: Holliday junction branch migration complex subunit RuvA (205 aa).

The domain I stretch occupies residues 1–65 (MIAKLKGILD…EDRIHLFGFL (65 aa)). The segment at 66–144 (DNTEKVAFNM…NINTIANNTS (79 aa)) is domain II. The segment at 145–153 (LATLSTDSN) is flexible linker. Residues 154–205 (THDNILSDAITALIALGISRAEATQILSDIYALSPSISVNELVRTALQRRAK) are domain III.

Belongs to the RuvA family. As to quaternary structure, homotetramer. Forms an RuvA(8)-RuvB(12)-Holliday junction (HJ) complex. HJ DNA is sandwiched between 2 RuvA tetramers; dsDNA enters through RuvA and exits via RuvB. An RuvB hexamer assembles on each DNA strand where it exits the tetramer. Each RuvB hexamer is contacted by two RuvA subunits (via domain III) on 2 adjacent RuvB subunits; this complex drives branch migration. In the full resolvosome a probable DNA-RuvA(4)-RuvB(12)-RuvC(2) complex forms which resolves the HJ.

Its subcellular location is the cytoplasm. Its function is as follows. The RuvA-RuvB-RuvC complex processes Holliday junction (HJ) DNA during genetic recombination and DNA repair, while the RuvA-RuvB complex plays an important role in the rescue of blocked DNA replication forks via replication fork reversal (RFR). RuvA specifically binds to HJ cruciform DNA, conferring on it an open structure. The RuvB hexamer acts as an ATP-dependent pump, pulling dsDNA into and through the RuvAB complex. HJ branch migration allows RuvC to scan DNA until it finds its consensus sequence, where it cleaves and resolves the cruciform DNA. In Orientia tsutsugamushi (strain Ikeda) (Rickettsia tsutsugamushi), this protein is Holliday junction branch migration complex subunit RuvA.